A 320-amino-acid polypeptide reads, in one-letter code: O(6)-methylguanine-induced apoptosis 2 (320 aa).

Residues 46–91 (LNESPGPGSYLSHSPAEGCSPSFSKRGTGSFASKGGRVPRSFQRLS) form a disordered region. 7 STPGR repeats span residues 49-82 (SPGPGSYLSHSPAEGCSPSFSKRGTGSFASKGGR), 91-103 (SPGPDAYNLQMSL), 132-163 (NPAPNQYDVSYRAVDKNSTISGESAFRSKTRR), 173-192 (GPSPCHYKVSDVLVQKSPQA), 213-233 (PGPGTYNPHQPPEPVKRTVLP), 254-266 (PGPGHYDIVNYNR), and 294-305 (PGPGFYEPTVLS). Polar residues predominate over residues 66 to 76 (PSFSKRGTGSF). The interval 207–226 (PVRNNIPGPGTYNPHQPPEP) is disordered.

It belongs to the STPG1 family.

Its subcellular location is the cytoplasm. It is found in the nucleus. Its function is as follows. May positively contribute to the induction of apoptosis triggered by O(6)-methylguanine. In Danio rerio (Zebrafish), this protein is O(6)-methylguanine-induced apoptosis 2 (stpg1).